The sequence spans 1548 residues: MPSDFISLLSADLDLESPKSLYSRDSLKLHPSQNFHRAGLLEESVYDLLPKELQLPPPRETSAASMSQTSGGEAGSPPPAVVAADASSAPSSSMGGACSSFTTSSSPTIYSTSVTDSKAMQVESCSSAVGVSNRGVSEKQLTGNTVQQHPSTPKRHTVLYISPPPEDLLDNSRMSCQDEGCGLESEQSCSMWMEDSPSNFSNMSTSSYNDNTEVPRKSRKRNPKQRPGVKRRDCEESNMDIFDADSAKAPHYVLSQLTTDNKGNSKAGNGTLDSQKGTGVKKSPMLCGQYPVKSEGKELKIVVQPETQHRARYLTEGSRGSVKDRTQQGFPTVKLEGHNEPVVLQVFVGNDSGRVKPHGFYQACRVTGRNTTPCKEVDIEGTTVIEVGLDPSSNMTLAVDCVGILKLRNADVEARIGIAGSKKKSTRARLVFRVNITRKDGSTLTLQTPSSPILCTQPAGVPEILKKSLHSCSVKGEEEVFLIGKNFLKGTKVIFQENVSDENSWKSEAEIDMELFHQNHLIVKVPPYHDQHITLPVSVGIYVVTNAGRSHDVQPFTYTPDPAAGALSVNVKKEISSPARPCSFEEALKAMKTTGCNVDKVTILPNALITPLISSSMIKTEDVTPMEVTSEKRSSPIFQTTKTVGSTQQTLETISNIAGNASFSSPSSSHLSPENENQQQLQPKAYNPETLTTIQTQDISQPGTFPAVSASSQLPSSDALLQQAAQFQTRDAQSRDTMQSDSVVNLSQLTEAPQQQQSPLQEQAQIPSNIFPSPNSVSQLQSTIQQLQAGSFTGSTASGSNGSVDLVQQVLEAQQQLSSVLFSTPDGNENVQEQLNADIFQVSQIQNSVSPGMFSSTESAVHTRPDNLLPGRADSVHQQTENTLSSQQQQQQQQQQQQQQQVIESSAAMVMEMQQSICQAAAQIQSELFPSAASANGSLQQSPVYQQPSHMMSALPTSEDMQMQCELFSSPPAVSGNETSTTTTPQVATPGSTMFQPPNSGDGEETGAQAKQIQSSVFQTMVQMQHSGDSQPQVNLFSSTKNIMSVQSNGTQQQGNSLFQQGSEMLSLQSGSFLQQSSHSQAQLFHPQNPIADAQSLSQETQGPMFHSANPIVHSQTSTASSEQLQPSMFHSQSTIAVLQGSSVPQDQQSPNIYLSQSSISNLQTNTVAQEEQISFFSAQNSISPLQSTSNTEQQAAFQQQPPISHIQTPLLSQEQAQPSQQGLFQPQVALGSLPANPMPQNQQGPIFQTQRPIVGMQSNSPSQEQQQQQQQQQQQQQQQQQQSILFSNQNAMATMASQKQPPPNMIFSPNQNPMASQEQQNQSIFHQQSNMAPMNQEQQPMQFQNQPTVSSLQNPGPTPSESPQTSLFHSSPQIQLVQGSPSSQEQQVTLFLSPASMSALQTSINQPDMQQSPLYSPQNNIPGIQGSTSSPQPQAALFHNTTGGTINQLQNSPGSSQQTSGMFLFGIQNNCSQLLTSGPATLPEQLMAINQPGQPQNEGQSSVTTLLSQQMPESAPLASSVNNSQNMEKIDLLVSLQSQGNNLTGSF.

The disordered stretch occupies residues 54–106 (QLPPPRETSAASMSQTSGGEAGSPPPAVVAADASSAPSSSMGGACSSFTTSSS). The span at 81–106 (VVAADASSAPSSSMGGACSSFTTSSS) shows a compositional bias: low complexity. Position 137 is a phosphoserine (serine 137). N6-acetyllysine is present on lysine 139. Polar residues predominate over residues 141-151 (LTGNTVQQHPS). Disordered stretches follow at residues 141-180 (LTGN…QDEG), 192-237 (WMED…CEES), and 258-282 (TTDN…GVKK). Serine 151 carries the post-translational modification Phosphoserine. Position 152 is a phosphothreonine; by CDK5 (threonine 152). Residue serine 172 is modified to Phosphoserine. Positions 196–209 (SPSNFSNMSTSSYN) are enriched in low complexity. Positions 217 to 229 (KSRKRNPKQRPGV) are enriched in basic residues. Positions 258–277 (TTDNKGNSKAGNGTLDSQKG) are enriched in polar residues. An RHD domain is found at 281 to 460 (KKSPMLCGQY…SPILCTQPAG (180 aa)). Residues 310–317 (RARYLTEG) mediate DNA binding. A Glycyl lysine isopeptide (Lys-Gly) (interchain with G-Cter in SUMO1); alternate cross-link involves residue lysine 572. A Glycyl lysine isopeptide (Lys-Gly) (interchain with G-Cter in SUMO2); alternate cross-link involves residue lysine 572. Serine 577 is subject to Phosphoserine. Residue lysine 619 forms a Glycyl lysine isopeptide (Lys-Gly) (interchain with G-Cter in SUMO2) linkage. 6 disordered regions span residues 659–682 (GNAS…QQLQ), 750–777 (TEAP…PNSV), 851–892 (PGMF…QQQQ), 970–1010 (SPPA…GAQA), 1097–1127 (LSQE…QLQP), and 1257–1388 (MQSN…QEQQ). Composition is skewed to low complexity over residues 662-672 (SFSSPSSSHLS) and 751-765 (EAPQ…EQAQ). 3 stretches are compositionally biased toward polar residues: residues 766-777 (IPSNIFPSPNSV), 851-860 (PGMFSSTESA), and 876-886 (VHQQTENTLSS). The span at 979–993 (TSTTTTPQVATPGST) shows a compositional bias: low complexity. Residues 1113 to 1127 (VHSQTSTASSEQLQP) show a composition bias toward polar residues. Over residues 1264–1283 (QEQQQQQQQQQQQQQQQQQQ) the composition is skewed to low complexity. Polar residues-rich tracts occupy residues 1284–1300 (SILF…ASQK) and 1308–1333 (FSPN…SNMA). A compositionally biased stretch (low complexity) spans 1334–1348 (PMNQEQQPMQFQNQP). A compositionally biased stretch (polar residues) spans 1349–1388 (TVSSLQNPGPTPSESPQTSLFHSSPQIQLVQGSPSSQEQQ).

As to quaternary structure, homodimer when bound to DNA, completely encircles its DNA target. Interacts with CIDEC; this interaction is direct and retains NFAT5 in the cytoplasm. Does not bind with Fos and Jun transcription factors. Interacts with DDX5 and DDX17; this interaction leads to DDX5/DDX17 recruitment to LNC2 and S100A4 promoters and NFAT5-mediated DDX5/DDX17-enhanced transactivation. Post-translationally, phosphorylated. Phosphorylated at Thr-152 by CDK5 in response to osmotic stress; this phosphorylation mediates its rapid nuclear localization. Poly-ADP-ribosylated by PARP1 in response to DNA damage, promoting recruitment to sites of R-loop-associated DNA damage.

The protein localises to the nucleus. It is found in the cytoplasm. It localises to the chromosome. Functionally, transcription factor involved, among others, in the transcriptional regulation of osmoprotective and inflammatory genes. Binds the DNA consensus sequence 5'-[ACT][AG]TGGAAA[CAT]A[TA][ATC][CA][ATG][GT][GAC][CG][CT]-3'. Mediates the transcriptional response to hypertonicity. Positively regulates the transcription of LCN2 and S100A4 genes; optimal transactivation of these genes requires the presence of DDX5/DDX17. Also involved in the DNA damage response by preventing formation of R-loops; R-loops are composed of a DNA:RNA hybrid and the associated non-template single-stranded DNA. In Rattus norvegicus (Rat), this protein is Nuclear factor of activated T-cells 5 (Nfat5).